The primary structure comprises 699 residues: Elongation factor G (699 aa).

Positions Glu-8 to Ile-287 constitute a tr-type G domain. Residues Ala-17–Thr-24, Asp-85–His-89, and Asn-139–Asp-142 contribute to the GTP site.

This sequence belongs to the TRAFAC class translation factor GTPase superfamily. Classic translation factor GTPase family. EF-G/EF-2 subfamily.

It is found in the cytoplasm. Catalyzes the GTP-dependent ribosomal translocation step during translation elongation. During this step, the ribosome changes from the pre-translocational (PRE) to the post-translocational (POST) state as the newly formed A-site-bound peptidyl-tRNA and P-site-bound deacylated tRNA move to the P and E sites, respectively. Catalyzes the coordinated movement of the two tRNA molecules, the mRNA and conformational changes in the ribosome. In Aquifex aeolicus (strain VF5), this protein is Elongation factor G (fusA).